The sequence spans 474 residues: tRNA-2-methylthio-N(6)-dimethylallyladenosine synthase (474 aa).

Residues 3–120 (KKLHIKTWGC…LPEMIDQIRD (118 aa)) form the MTTase N-terminal domain. The [4Fe-4S] cluster site is built by Cys-12, Cys-49, Cys-83, Cys-157, Cys-161, and Cys-164. A Radical SAM core domain is found at 143–375 (RADGPSAFVS…QDRITQQAMR (233 aa)). In terms of domain architecture, TRAM spans 378 to 441 (RQMLGTVQRI…TNSLRGTFVR (64 aa)).

Belongs to the methylthiotransferase family. MiaB subfamily. In terms of assembly, monomer. The cofactor is [4Fe-4S] cluster.

The protein localises to the cytoplasm. The enzyme catalyses N(6)-dimethylallyladenosine(37) in tRNA + (sulfur carrier)-SH + AH2 + 2 S-adenosyl-L-methionine = 2-methylsulfanyl-N(6)-dimethylallyladenosine(37) in tRNA + (sulfur carrier)-H + 5'-deoxyadenosine + L-methionine + A + S-adenosyl-L-homocysteine + 2 H(+). Its function is as follows. Catalyzes the methylthiolation of N6-(dimethylallyl)adenosine (i(6)A), leading to the formation of 2-methylthio-N6-(dimethylallyl)adenosine (ms(2)i(6)A) at position 37 in tRNAs that read codons beginning with uridine. The polypeptide is tRNA-2-methylthio-N(6)-dimethylallyladenosine synthase (Shewanella sediminis (strain HAW-EB3)).